A 477-amino-acid polypeptide reads, in one-letter code: Argininosuccinate lyase (477 aa).

The protein belongs to the lyase 1 family. Argininosuccinate lyase subfamily.

The protein localises to the cytoplasm. It carries out the reaction 2-(N(omega)-L-arginino)succinate = fumarate + L-arginine. It functions in the pathway amino-acid biosynthesis; L-arginine biosynthesis; L-arginine from L-ornithine and carbamoyl phosphate: step 3/3. This Corynebacterium efficiens (strain DSM 44549 / YS-314 / AJ 12310 / JCM 11189 / NBRC 100395) protein is Argininosuccinate lyase.